The sequence spans 92 residues: Small ribosomal subunit protein uS19 (92 aa).

This sequence belongs to the universal ribosomal protein uS19 family.

Protein S19 forms a complex with S13 that binds strongly to the 16S ribosomal RNA. The sequence is that of Small ribosomal subunit protein uS19 from Leuconostoc mesenteroides subsp. mesenteroides (strain ATCC 8293 / DSM 20343 / BCRC 11652 / CCM 1803 / JCM 6124 / NCDO 523 / NBRC 100496 / NCIMB 8023 / NCTC 12954 / NRRL B-1118 / 37Y).